The chain runs to 481 residues: 3-isopropylmalate dehydratase large subunit (481 aa).

The [4Fe-4S] cluster site is built by C357, C417, and C420. The segment covering 429–441 has biased composition (polar residues); it reads SPGQRCASTSNRN. The disordered stretch occupies residues 429 to 451; that stretch reads SPGQRCASTSNRNFEGRQGKGGR.

It belongs to the aconitase/IPM isomerase family. LeuC type 1 subfamily. As to quaternary structure, heterodimer of LeuC and LeuD. The cofactor is [4Fe-4S] cluster.

It catalyses the reaction (2R,3S)-3-isopropylmalate = (2S)-2-isopropylmalate. It participates in amino-acid biosynthesis; L-leucine biosynthesis; L-leucine from 3-methyl-2-oxobutanoate: step 2/4. In terms of biological role, catalyzes the isomerization between 2-isopropylmalate and 3-isopropylmalate, via the formation of 2-isopropylmaleate. In Mycobacterium sp. (strain KMS), this protein is 3-isopropylmalate dehydratase large subunit.